The chain runs to 95 residues: Immunogenic miracidial antigen 8C (95 aa).

Over residues 1–15 the composition is skewed to polar residues; the sequence is EFTISFSSPVISTGQ. Residues 1-95 form a disordered region; it reads EFTISFSSPV…PKKYGSGHKY (95 aa). Residues 20 to 41 are compositionally biased toward acidic residues; it reads GDEDYHDGDDDVDYTDDVDDVD. Polar residues predominate over residues 45 to 59; it reads GSPSQLLQGGYQRNQ.

Belongs to the immunogenic miracidial antigen family.

In Schistosoma japonicum (Blood fluke), this protein is Immunogenic miracidial antigen 8C (8C).